A 256-amino-acid chain; its full sequence is 4-hydroxy-tetrahydrodipicolinate reductase (256 aa).

8-13 (GASGKM) lines the NAD(+) pocket. Lys36 contacts NADP(+). Residues 87-89 (GTT) and 111-114 (ATNM) contribute to the NAD(+) site. The Proton donor/acceptor role is filled by His143. His144 provides a ligand contact to (S)-2,3,4,5-tetrahydrodipicolinate. Residue Lys147 is the Proton donor of the active site. 153-154 (GT) contacts (S)-2,3,4,5-tetrahydrodipicolinate.

The protein belongs to the DapB family.

It is found in the cytoplasm. It catalyses the reaction (S)-2,3,4,5-tetrahydrodipicolinate + NAD(+) + H2O = (2S,4S)-4-hydroxy-2,3,4,5-tetrahydrodipicolinate + NADH + H(+). It carries out the reaction (S)-2,3,4,5-tetrahydrodipicolinate + NADP(+) + H2O = (2S,4S)-4-hydroxy-2,3,4,5-tetrahydrodipicolinate + NADPH + H(+). It functions in the pathway amino-acid biosynthesis; L-lysine biosynthesis via DAP pathway; (S)-tetrahydrodipicolinate from L-aspartate: step 4/4. Its function is as follows. Catalyzes the conversion of 4-hydroxy-tetrahydrodipicolinate (HTPA) to tetrahydrodipicolinate. The chain is 4-hydroxy-tetrahydrodipicolinate reductase from Campylobacter concisus (strain 13826).